The primary structure comprises 441 residues: Histone-lysine N-methyltransferase set9 (441 aa).

An SET domain is found at 108–221 (CKFEICSTNQ…PGEEITTFYS (114 aa)).

Belongs to the class V-like SAM-binding methyltransferase superfamily. Histone-lysine methyltransferase family. Suvar4-20 subfamily.

It localises to the nucleus. It is found in the chromosome. The enzyme catalyses L-lysyl(20)-[histone H4] + 3 S-adenosyl-L-methionine = N(6),N(6),N(6)-trimethyl-L-lysyl(20)-[histone H4] + 3 S-adenosyl-L-homocysteine + 3 H(+). Its function is as follows. Histone methyltransferase that specifically trimethylates 'Lys-20' of histone H4 to form H4K20me3. H4 'Lys-20' methylation is apparently not involved in the regulation of gene expression or heterochromatin function but participates in DNA damage response by giving a 'histone mark' required for the recruitment of the checkpoint protein Crb2 to sites of DNA damage. This Schizosaccharomyces pombe (strain 972 / ATCC 24843) (Fission yeast) protein is Histone-lysine N-methyltransferase set9 (set9).